Consider the following 208-residue polypeptide: ATP-dependent Clp protease proteolytic subunit (208 aa).

S107 serves as the catalytic Nucleophile. Residue H132 is part of the active site.

Belongs to the peptidase S14 family. Fourteen ClpP subunits assemble into 2 heptameric rings which stack back to back to give a disk-like structure with a central cavity, resembling the structure of eukaryotic proteasomes.

Its subcellular location is the cytoplasm. It catalyses the reaction Hydrolysis of proteins to small peptides in the presence of ATP and magnesium. alpha-casein is the usual test substrate. In the absence of ATP, only oligopeptides shorter than five residues are hydrolyzed (such as succinyl-Leu-Tyr-|-NHMec, and Leu-Tyr-Leu-|-Tyr-Trp, in which cleavage of the -Tyr-|-Leu- and -Tyr-|-Trp bonds also occurs).. Its function is as follows. Cleaves peptides in various proteins in a process that requires ATP hydrolysis. Has a chymotrypsin-like activity. Plays a major role in the degradation of misfolded proteins. The sequence is that of ATP-dependent Clp protease proteolytic subunit from Methylobacterium radiotolerans (strain ATCC 27329 / DSM 1819 / JCM 2831 / NBRC 15690 / NCIMB 10815 / 0-1).